The primary structure comprises 1357 residues: MAKTSYALLLLDILLTFNVAKAIELRFVPDPPTLNITEKTIKINASDTLQITCRGRQILEWSTPHNRTSSETRLTISDCSGDGLFCSTLTLSKAVANETGEYRCFYKSLPKEDGKTSVAVYVFIQDYRTPFVRIAQDYDVVFIREGEQVVIPCLVSVEDLNVTLYTKYPVKELSTDGKEVIWDSRRGFILPSRVVSYAGVVYCQTTIRNETFQSSPYIVAVVGYKIYDLTLSPQHERLTVGERLILNCTAHTELNVGIDFQWTFPHEKRSVNGSMSTSRYKTSSNKKKLWNSLELSNTLTVENVTLNDTGEYICTASSGQMQKIAQASLIVYEKPFIALSDQLWQTVEAKAGDAEAKILVKYYAYPEPAVRWYKNDQLIVLRDEYRMKFYRGVHLTIYGVTEKDAGNYTVVMTNKITKEEQRRTFQLVVNDLPRIFEKDVSLDRDVHMYGSSPTLTCTASGGSSPVTIKWQWMPREDCPVRFLPKSDTRMAKCDKWREMSNNTGKNPLISQTSVDERTLKTISTLKIQKAVDHALYRCIATNKMGQDQRVIVFQVTRFLNLSVLPSSSPIEGQDVIMRCVADRLLYYNLRWYRVANVANHDPPPAAVPCDTLTLSHLHQPNVTVSGLQGTNVTLDMPIPNATMMDQGLYACQVEIVGTNEKTCLLHNLRLRALEMSRIVTNLTDQRVNVSDSTTLVCEVSGTPTPTIVWTKDNQTVMEGSGVILKRSNRVLTIQRVKKEDSGLYICTACNQQGCESSEARISVDGAEEKMNVELIMPIGAVVIAMFLWLLIVFVIRNRKRPNDGDLKTGYLSIILDSDDMPMDEHCERLTYDASKWEFPRDRLKLGEPLGRGAFGQVVEATAYGIEKATTCTTVAVKMLKEGATSSEYRALMSELKILIHIGHHLNVVNLLGACTKQGGPLMVIVEYCKHGNLSSYLKSKRGEYSPYKKRTPRMPNRREVQQDEDPREGDLGLGTSTRLDICTGTAVCTRTGEQTYKTLQDEQESSDWDHLTMEDLISYSFQVAKGMEFLASRKCIHRDLAARNILLSENSVVKICDFGLARDVYKDPDYVRKGDARLPLKWMAPETIFDRVYTTQSDVWSFGVLLWEIFSLGASPYPGVCIDESFCRRLKEGTRMRAPDYATPEIYQTMLDCWLDRPLDRPTFTQLVEHLGNLLQASAQQDGKDYIPLTNGEMEEELVAPHLNVTSKRSFYAGNTEAQLHYDNAPPLGFPQQMNSSGVPVNMTGFVDIPLEHTTVMDGHVDCGVGLSREQMKALDRQAQRPLNFSPLLRCKSKESLASESSNQTSGYQSGYHSDDAEAPIYANEEMILKRDIRKKPPLPKRNDKFSAEVRYSAPPV.

The signal sequence occupies residues 1–22; that stretch reads MAKTSYALLLLDILLTFNVAKA. The Extracellular portion of the chain corresponds to 23 to 774; it reads IELRFVPDPP…GAEEKMNVEL (752 aa). Ig-like C2-type domains lie at 32–120, 120–222, 216–330, 335–426, 433–553, 556–667, and 676–762; these read PTLN…SVAV, VYVF…VAVV, PYIV…ASLI, PFIA…RTFQ, PRIF…VIVF, TRFL…LLHN, and SRIV…ARIS. Asn-35, Asn-44, Asn-66, Asn-97, Asn-161, Asn-209, Asn-247, Asn-272, Asn-303, Asn-307, Asn-407, Asn-501, Asn-560, Asn-621, Asn-631, Asn-640, Asn-681, Asn-688, and Asn-713 each carry an N-linked (GlcNAc...) asparagine glycan. Disulfide bonds link Cys-53/Cys-104 and Cys-153/Cys-203. Residues Cys-248 and Cys-314 are joined by a disulfide bond. A disulfide bridge links Cys-457 with Cys-538. A disulfide bridge connects residues Cys-579 and Cys-651. A disulfide bridge links Cys-697 with Cys-746. The helical transmembrane segment at 775–795 threads the bilayer; that stretch reads IMPIGAVVIAMFLWLLIVFVI. Residues 796–1357 lie on the Cytoplasmic side of the membrane; the sequence is RNRKRPNDGD…AEVRYSAPPV (562 aa). The region spanning 843-1173 is the Protein kinase domain; sequence LKLGEPLGRG…FTQLVEHLGN (331 aa). ATP is bound by residues 849-857 and Lys-877; that span reads LGRGAFGQV. The tract at residues 944-975 is disordered; that stretch reads YSPYKKRTPRMPNRREVQQDEDPREGDLGLGT. Asp-1039 serves as the catalytic Proton acceptor. 4 positions are modified to phosphotyrosine; by autocatalysis: Tyr-1065, Tyr-1070, Tyr-1186, and Tyr-1222. A disordered region spans residues 1296–1357; it reads SLASESSNQT…AEVRYSAPPV (62 aa). Positions 1298 to 1312 are enriched in polar residues; that stretch reads ASESSNQTSGYQSGY.

It belongs to the protein kinase superfamily. Tyr protein kinase family. CSF-1/PDGF receptor subfamily. In terms of assembly, interacts with isoform VEGF165 of vegfaa and, to a lesser extent, with isoform VEGF171 of vegfab. Interacts (via juxtamembrane region) with chaperone pdcl3 (via thioredoxin fold region); the interaction leads to increased vegfr2 abundance through inhibition of its ubiquitination and degradation. As to expression, first expressed in embryos between 5- and 7-somites in the bilateral stripes that contain the developing angioblasts, and then localized to the intermediate cell mass (ICM) and the developing vasculature. By 30 hpf, expressed in the major trunk, head and intersomitic vessels, persisting through 4 dpf when expression is seen in developing subintestinal veins and in the remaining vasculature.

It localises to the cell membrane. The protein resides in the cytoplasm. The protein localises to the nucleus. It is found in the cytoplasmic vesicle. Its subcellular location is the early endosome. It localises to the cell junction. The protein resides in the endoplasmic reticulum. The enzyme catalyses L-tyrosyl-[protein] + ATP = O-phospho-L-tyrosyl-[protein] + ADP + H(+). Its function is as follows. Receptor for VEGF or VEGFC. Has a tyrosine-protein kinase activity. Combinations of multiple VEGF receptors are required for development of different blood vessel types in the embryo. Involved in angiogenesis, specifically in VEGF-induced sprouting of new blood vessels. Particularly involved in artery formation. Does not appear to be required for hematopoiesis. The chain is Vascular endothelial growth factor receptor 2 from Danio rerio (Zebrafish).